A 551-amino-acid polypeptide reads, in one-letter code: Arginine--tRNA ligase (551 aa).

The 'HIGH' region motif lies at 123–133 (ANPTGPLTIGR).

The protein belongs to the class-I aminoacyl-tRNA synthetase family. As to quaternary structure, monomer.

The protein resides in the cytoplasm. The catalysed reaction is tRNA(Arg) + L-arginine + ATP = L-arginyl-tRNA(Arg) + AMP + diphosphate. The chain is Arginine--tRNA ligase from Chlorobium limicola (strain DSM 245 / NBRC 103803 / 6330).